An 882-amino-acid polypeptide reads, in one-letter code: Valine--tRNA ligase (882 aa).

The 'HIGH' region motif lies at 45–55; it reads PNVTGSLHIGH. The 'KMSKS' region signature appears at 525 to 529; it reads KFSKS. Residue K528 coordinates ATP. A coiled-coil region spans residues 812–881; the sequence is EGLIDVAKEK…VLKKGIQNLA (70 aa).

It belongs to the class-I aminoacyl-tRNA synthetase family. ValS type 1 subfamily. As to quaternary structure, monomer.

It localises to the cytoplasm. The catalysed reaction is tRNA(Val) + L-valine + ATP = L-valyl-tRNA(Val) + AMP + diphosphate. Catalyzes the attachment of valine to tRNA(Val). As ValRS can inadvertently accommodate and process structurally similar amino acids such as threonine, to avoid such errors, it has a 'posttransfer' editing activity that hydrolyzes mischarged Thr-tRNA(Val) in a tRNA-dependent manner. In Leptospira interrogans serogroup Icterohaemorrhagiae serovar Lai (strain 56601), this protein is Valine--tRNA ligase.